The chain runs to 341 residues: UDP-N-acetylenolpyruvoylglucosamine reductase (341 aa).

The 173-residue stretch at 13–185 folds into the FAD-binding PCMH-type domain; the sequence is FGVEQSCLSM…TAVGLRLPKA (173 aa). Residue Arg-161 is part of the active site. Residue Ser-231 is the Proton donor of the active site. Residue Glu-327 is part of the active site.

The protein belongs to the MurB family. FAD serves as cofactor.

The protein localises to the cytoplasm. The catalysed reaction is UDP-N-acetyl-alpha-D-muramate + NADP(+) = UDP-N-acetyl-3-O-(1-carboxyvinyl)-alpha-D-glucosamine + NADPH + H(+). It functions in the pathway cell wall biogenesis; peptidoglycan biosynthesis. Its function is as follows. Cell wall formation. The polypeptide is UDP-N-acetylenolpyruvoylglucosamine reductase (Shewanella sp. (strain MR-7)).